An 875-amino-acid chain; its full sequence is Leucine--tRNA ligase (875 aa).

The segment covering 1-20 (MPSAGSVNAANPAVDTSAQT) has biased composition (polar residues). The tract at residues 1-22 (MPSAGSVNAANPAVDTSAQTGR) is disordered. The 'HIGH' region motif lies at 60–70 (PYPSGSLHMGH). The 'KMSKS' region motif lies at 634-638 (KMSKS). Residue K637 participates in ATP binding.

This sequence belongs to the class-I aminoacyl-tRNA synthetase family.

The protein localises to the cytoplasm. The catalysed reaction is tRNA(Leu) + L-leucine + ATP = L-leucyl-tRNA(Leu) + AMP + diphosphate. The polypeptide is Leucine--tRNA ligase (Synechococcus sp. (strain CC9605)).